The primary structure comprises 360 residues: Peptide chain release factor 1 (360 aa).

The residue at position 234 (glutamine 234) is an N5-methylglutamine.

Belongs to the prokaryotic/mitochondrial release factor family. Methylated by PrmC. Methylation increases the termination efficiency of RF1.

The protein resides in the cytoplasm. Functionally, peptide chain release factor 1 directs the termination of translation in response to the peptide chain termination codons UAG and UAA. The polypeptide is Peptide chain release factor 1 (Clostridium botulinum (strain Alaska E43 / Type E3)).